A 335-amino-acid chain; its full sequence is Tryptophan--tRNA ligase (335 aa).

ATP contacts are provided by residues 13–15 (QPS) and 21–22 (GN). Residues 14–22 (PSGNLTIGN) carry the 'HIGH' region motif. Residue D136 participates in L-tryptophan binding. ATP contacts are provided by residues 148-150 (GQD), I187, and 196-200 (KMSKS). Residues 196-200 (KMSKS) carry the 'KMSKS' region motif.

It belongs to the class-I aminoacyl-tRNA synthetase family. In terms of assembly, homodimer.

Its subcellular location is the cytoplasm. It catalyses the reaction tRNA(Trp) + L-tryptophan + ATP = L-tryptophyl-tRNA(Trp) + AMP + diphosphate + H(+). In terms of biological role, catalyzes the attachment of tryptophan to tRNA(Trp). This is Tryptophan--tRNA ligase from Buchnera aphidicola subsp. Acyrthosiphon pisum (strain APS) (Acyrthosiphon pisum symbiotic bacterium).